The following is a 73-amino-acid chain: Venom peptide La1 (73 aa).

A Lysine amide modification is found at K73.

This sequence belongs to the scorpion La1-like peptide family. In terms of processing, contains 4 disulfide bonds. Expressed by the venom gland.

It is found in the secreted. Functionally, not toxic to insect. This Liocheles australasiae (Dwarf wood scorpion) protein is Venom peptide La1.